Consider the following 524-residue polypeptide: GMP synthase [glutamine-hydrolyzing] (524 aa).

Residues 9–207 (RILILDFGSQ…VIHICQCIPN (199 aa)) enclose the Glutamine amidotransferase type-1 domain. Cysteine 86 serves as the catalytic Nucleophile. Residues histidine 181 and glutamate 183 contribute to the active site. Residues 208–399 (WTTKHIIEDS…LGLPADLIYR (192 aa)) form the GMPS ATP-PPase domain. ATP is bound at residue 235-241 (SGGVDSA).

Homodimer.

The catalysed reaction is XMP + L-glutamine + ATP + H2O = GMP + L-glutamate + AMP + diphosphate + 2 H(+). The protein operates within purine metabolism; GMP biosynthesis; GMP from XMP (L-Gln route): step 1/1. Functionally, catalyzes the synthesis of GMP from XMP. The protein is GMP synthase [glutamine-hydrolyzing] of Coxiella burnetii (strain RSA 331 / Henzerling II).